We begin with the raw amino-acid sequence, 96 residues long: Co-chaperonin GroES (96 aa).

This sequence belongs to the GroES chaperonin family. As to quaternary structure, heptamer of 7 subunits arranged in a ring. Interacts with the chaperonin GroEL.

Its subcellular location is the cytoplasm. Its function is as follows. Together with the chaperonin GroEL, plays an essential role in assisting protein folding. The GroEL-GroES system forms a nano-cage that allows encapsulation of the non-native substrate proteins and provides a physical environment optimized to promote and accelerate protein folding. GroES binds to the apical surface of the GroEL ring, thereby capping the opening of the GroEL channel. The polypeptide is Co-chaperonin GroES (Polaromonas naphthalenivorans (strain CJ2)).